The following is a 216-amino-acid chain: Talanin (216 aa).

As to expression, isoform 4 is expressed in placenta, lung, kidney and pancreas.

May play a role in uric acid excretion. The chain is Talanin (ZNF365) from Homo sapiens (Human).